The primary structure comprises 27 residues: Zinc metalloproteinase multactivase catalytic subunit (27 aa).

In terms of domain architecture, Peptidase M12B spans 12–27 (FIELVIIVDHSXXTYK). Residue E14 coordinates Ca(2+).

The protein belongs to the venom metalloproteinase (M12B) family. P-III subfamily. P-IIId sub-subfamily. As to quaternary structure, heterodimer of a metalloproteinase subunit and a regulatory subunit comprising two homologous disulfide-linked lectins (AC P81798). Zn(2+) serves as cofactor. Expressed by the venom gland.

It localises to the secreted. Functionally, this carinactivase-like calcium-dependent prothrombin (F2) activator activates prothrombin via recognition of the calcium ion bound conformation of its gamma-carboxyglutamic acid (GLA) domain, and the subsequent conversion of prothrombin to active thrombin is catalyzed by the catalytic subunit. The sequence is that of Zinc metalloproteinase multactivase catalytic subunit from Echis multisquamatus (Central Asian sand viper).